Here is a 249-residue protein sequence, read N- to C-terminus: Coproheme decarboxylase (249 aa).

Y145 is a catalytic residue. Residues 145–149 and H172 contribute to the Fe-coproporphyrin III site; that span reads YPMAR.

It belongs to the ChdC family. Type 1 subfamily. It depends on Fe-coproporphyrin III as a cofactor.

It carries out the reaction Fe-coproporphyrin III + 2 H2O2 + 2 H(+) = heme b + 2 CO2 + 4 H2O. It catalyses the reaction Fe-coproporphyrin III + H2O2 + H(+) = harderoheme III + CO2 + 2 H2O. The enzyme catalyses harderoheme III + H2O2 + H(+) = heme b + CO2 + 2 H2O. The protein operates within porphyrin-containing compound metabolism; protoheme biosynthesis. In terms of biological role, involved in coproporphyrin-dependent heme b biosynthesis. Catalyzes the decarboxylation of Fe-coproporphyrin III (coproheme) to heme b (protoheme IX), the last step of the pathway. The reaction occurs in a stepwise manner with a three-propionate intermediate. The protein is Coproheme decarboxylase of Oceanobacillus iheyensis (strain DSM 14371 / CIP 107618 / JCM 11309 / KCTC 3954 / HTE831).